The following is a 222-amino-acid chain: Matrix protein (222 aa).

The short motif at 46–49 (PTAP) is the PTAP/PSAP motif element.

As to quaternary structure, homomultimer. Interacts with viral nucleocapsid. Interacts with host TSG101.

It is found in the virion membrane. The protein resides in the host endomembrane system. The protein localises to the host nucleus membrane. In terms of biological role, plays a major role in assembly and budding of virion, by recruiting cellular partners of the ESCRT complexes that play a key role in releasing the budding particle from the host membrane. Condensates the ribonucleocapsid core during virus assembly. The polypeptide is Matrix protein (M) (Drosophila melanogaster (Fruit fly)).